The sequence spans 279 residues: Apolipoprotein L domain-containing protein 1 (279 aa).

A run of 3 helical transmembrane segments spans residues 83-105, 122-142, and 192-212; these read SLVANVAGSSLSATGALAAIVGL, GLGVATAGGAVTITSDLSLIF, and IALYNSVYFIVFFGSRGFLIP. Positions 226 to 253 form a coiled coil; sequence LKAKIQKLAESLESCTGALDELSEQLES.

This sequence belongs to the apolipoprotein L family. As to expression, expressed in neonatal dermal microvascular endothelial cells.

It localises to the cell membrane. The protein resides in the cell junction. The protein localises to the cytoplasmic vesicle. It is found in the secretory vesicle. Functionally, is a modulator of endothelial barrier permeability, required for proper organization of endothelial cell-cell junctions and cytoskeleton. It also plays a role in the modulation of secretory autophagy. May affect blood-brain barrier permeability. The sequence is that of Apolipoprotein L domain-containing protein 1 (APOLD1) from Homo sapiens (Human).